Consider the following 472-residue polypeptide: Argininosuccinate lyase (472 aa).

It belongs to the lyase 1 family. Argininosuccinate lyase subfamily.

Its subcellular location is the cytoplasm. The catalysed reaction is 2-(N(omega)-L-arginino)succinate = fumarate + L-arginine. It functions in the pathway amino-acid biosynthesis; L-arginine biosynthesis; L-arginine from L-ornithine and carbamoyl phosphate: step 3/3. This Synechococcus sp. (strain CC9902) protein is Argininosuccinate lyase.